A 170-amino-acid polypeptide reads, in one-letter code: Lipoprotein signal peptidase (170 aa).

4 helical membrane passes run 11 to 31 (LSWLWLSLLVLVIDQASKFYF), 41 to 61 (IVVIPDLFSWTLAYNTGAAFS), 69 to 89 (WQRWLFALIAIAVSAVLVVWL), and 95 to 115 (NETWLAIALALVLGGALGNLY). Residues D125 and D144 contribute to the active site. The chain crosses the membrane as a helical span at residues 136-156 (YFPAFNFADSAITVGAVMLAL).

Belongs to the peptidase A8 family.

It is found in the cell inner membrane. The enzyme catalyses Release of signal peptides from bacterial membrane prolipoproteins. Hydrolyzes -Xaa-Yaa-Zaa-|-(S,diacylglyceryl)Cys-, in which Xaa is hydrophobic (preferably Leu), and Yaa (Ala or Ser) and Zaa (Gly or Ala) have small, neutral side chains.. Its pathway is protein modification; lipoprotein biosynthesis (signal peptide cleavage). In terms of biological role, this protein specifically catalyzes the removal of signal peptides from prolipoproteins. The sequence is that of Lipoprotein signal peptidase from Pseudomonas fluorescens (strain Pf0-1).